A 455-amino-acid polypeptide reads, in one-letter code: Phosphoglucosamine mutase (455 aa).

The active-site Phosphoserine intermediate is Ser-106. Mg(2+) contacts are provided by Ser-106, Asp-245, Asp-247, and Asp-249. At Ser-106 the chain carries Phosphoserine.

It belongs to the phosphohexose mutase family. It depends on Mg(2+) as a cofactor. In terms of processing, activated by phosphorylation.

It carries out the reaction alpha-D-glucosamine 1-phosphate = D-glucosamine 6-phosphate. Its function is as follows. Catalyzes the conversion of glucosamine-6-phosphate to glucosamine-1-phosphate. The sequence is that of Phosphoglucosamine mutase from Acaryochloris marina (strain MBIC 11017).